A 392-amino-acid chain; its full sequence is NAD(P)H-quinone oxidoreductase subunit H, chloroplastic (392 aa).

This sequence belongs to the complex I 49 kDa subunit family. NDH is composed of at least 16 different subunits, 5 of which are encoded in the nucleus.

The protein localises to the plastid. Its subcellular location is the chloroplast thylakoid membrane. The catalysed reaction is a plastoquinone + NADH + (n+1) H(+)(in) = a plastoquinol + NAD(+) + n H(+)(out). It catalyses the reaction a plastoquinone + NADPH + (n+1) H(+)(in) = a plastoquinol + NADP(+) + n H(+)(out). In terms of biological role, NDH shuttles electrons from NAD(P)H:plastoquinone, via FMN and iron-sulfur (Fe-S) centers, to quinones in the photosynthetic chain and possibly in a chloroplast respiratory chain. The immediate electron acceptor for the enzyme in this species is believed to be plastoquinone. Couples the redox reaction to proton translocation, and thus conserves the redox energy in a proton gradient. The sequence is that of NAD(P)H-quinone oxidoreductase subunit H, chloroplastic from Marchantia polymorpha (Common liverwort).